The following is a 469-amino-acid chain: 6-phosphofructo-2-kinase/fructose-2,6-bisphosphatase 4 (469 aa).

Positions 1-249 (MASPRELTQN…YYLMNIHVTP (249 aa)) are 6-phosphofructo-2-kinase. The residue at position 29 (Ser29) is a Phosphoserine; by PKC. 46-54 (GLPARGKTY) provides a ligand contact to ATP. Beta-D-fructose 6-phosphate-binding residues include Arg79 and Arg103. The active site involves Asp129. Residues Thr131 and Arg137 each coordinate beta-D-fructose 6-phosphate. Cys159 is a catalytic residue. 168-173 (NIVQVK) is a binding site for ATP. Lys173, Arg194, and Tyr198 together coordinate beta-D-fructose 6-phosphate. Residues 250–469 (RSIYLCRHGE…EALVTVPAHQ (220 aa)) are fructose-2,6-bisphosphatase. Arg256 is a binding site for beta-D-fructose 2,6-bisphosphate. Residue His257 is the Tele-phosphohistidine intermediate of the active site. 3 residues coordinate beta-D-fructose 2,6-bisphosphate: Asn263, Gly269, and Arg306. Glu326 serves as the catalytic Proton donor/acceptor. Beta-D-fructose 2,6-bisphosphate is bound by residues Tyr337, Arg351, Lys355, Tyr366, Gln392, and Arg396. 348–351 (FALR) is an ATP binding site. ATP-binding positions include 392–396 (QAVMR) and Tyr428. The residue at position 444 (Thr444) is a Phosphothreonine; by PKC.

It in the C-terminal section; belongs to the phosphoglycerate mutase family. As to quaternary structure, homodimer. In terms of tissue distribution, testis.

The catalysed reaction is beta-D-fructose 2,6-bisphosphate + H2O = beta-D-fructose 6-phosphate + phosphate. It carries out the reaction beta-D-fructose 6-phosphate + ATP = beta-D-fructose 2,6-bisphosphate + ADP + H(+). With respect to regulation, the most important regulatory mechanism of these opposing activities is by phosphorylation and dephosphorylation of the enzyme. In terms of biological role, synthesis and degradation of fructose 2,6-bisphosphate. This chain is 6-phosphofructo-2-kinase/fructose-2,6-bisphosphatase 4 (Pfkfb4), found in Rattus norvegicus (Rat).